A 678-amino-acid chain; its full sequence is ABC transporter B family member 6 (678 aa).

Helical transmembrane passes span 95-115 (IILC…VPLI), 128-148 (EWHL…IWDI), 206-226 (LLFN…FLLF), 230-250 (AEFA…TLYV), 314-334 (FLLN…GLGL), and 346-366 (LGDV…LSWL). The ABC transmembrane type-1 domain maps to 95–375 (IILCVSIIFF…LGSSYRMILT (281 aa)). One can recognise an ABC transporter domain in the interval 418-660 (IEFRNISFTY…NGDYAHLWNQ (243 aa)). ATP contacts are provided by residues Tyr-427 and 459–470 (GSTGGGKSTIFR).

This sequence belongs to the ABC transporter superfamily. ABCB family. Heavy Metal importer (TC 3.A.1.210) subfamily.

The protein localises to the membrane. The polypeptide is ABC transporter B family member 6 (abcB6) (Dictyostelium discoideum (Social amoeba)).